The following is a 205-amino-acid chain: Pyridoxal 5'-phosphate synthase subunit PdxT (205 aa).

52-54 (GES) is an L-glutamine binding site. The active-site Nucleophile is the cysteine 84. L-glutamine-binding positions include arginine 116 and 145-146 (IR). Residues histidine 185 and glutamate 187 each act as charge relay system in the active site.

The protein belongs to the glutaminase PdxT/SNO family. In terms of assembly, in the presence of PdxS, forms a dodecamer of heterodimers. Only shows activity in the heterodimer.

It catalyses the reaction aldehydo-D-ribose 5-phosphate + D-glyceraldehyde 3-phosphate + L-glutamine = pyridoxal 5'-phosphate + L-glutamate + phosphate + 3 H2O + H(+). It carries out the reaction L-glutamine + H2O = L-glutamate + NH4(+). It participates in cofactor biosynthesis; pyridoxal 5'-phosphate biosynthesis. In terms of biological role, catalyzes the hydrolysis of glutamine to glutamate and ammonia as part of the biosynthesis of pyridoxal 5'-phosphate. The resulting ammonia molecule is channeled to the active site of PdxS. This is Pyridoxal 5'-phosphate synthase subunit PdxT from Staphylothermus marinus (strain ATCC 43588 / DSM 3639 / JCM 9404 / F1).